A 187-amino-acid chain; its full sequence is Elongation factor P (187 aa).

The protein belongs to the elongation factor P family.

It is found in the cytoplasm. It functions in the pathway protein biosynthesis; polypeptide chain elongation. In terms of biological role, involved in peptide bond synthesis. Stimulates efficient translation and peptide-bond synthesis on native or reconstituted 70S ribosomes in vitro. Probably functions indirectly by altering the affinity of the ribosome for aminoacyl-tRNA, thus increasing their reactivity as acceptors for peptidyl transferase. This chain is Elongation factor P, found in Corynebacterium diphtheriae (strain ATCC 700971 / NCTC 13129 / Biotype gravis).